Reading from the N-terminus, the 200-residue chain is Small ribosomal subunit protein uS4 (200 aa).

Positions 91-150 (TRLDNVVYRLGITPTRRSARQLVSHKHITVNGKIVNIPSYALKVGDIIGLTEKTKSSNAI) constitute an S4 RNA-binding domain.

The protein belongs to the universal ribosomal protein uS4 family. In terms of assembly, part of the 30S ribosomal subunit. Contacts protein S5. The interaction surface between S4 and S5 is involved in control of translational fidelity.

In terms of biological role, one of the primary rRNA binding proteins, it binds directly to 16S rRNA where it nucleates assembly of the body of the 30S subunit. Its function is as follows. With S5 and S12 plays an important role in translational accuracy. The protein is Small ribosomal subunit protein uS4 of Amoebophilus asiaticus (strain 5a2).